We begin with the raw amino-acid sequence, 555 residues long: Splicing factor U2af large subunit A (555 aa).

Residues 1–165 (MRDYEGNGVD…ISGFDMAPPT (165 aa)) form a disordered region. Basic and acidic residues-rich tracts occupy residues 23 to 81 (ISRD…EKDR) and 90 to 127 (RDRS…DRED). The segment covering 143 to 155 (SKSRSRSPSKSKR) has biased composition (basic residues). RRM domains lie at 221–304 (RRVY…RPSD), 341–419 (DRIF…RANQ), and 460–546 (EVVT…YPEN).

It belongs to the splicing factor SR family. Expressed in stems, leaves and apical buds.

Its subcellular location is the nucleus. In terms of biological role, necessary for the splicing of pre-mRNA. Binds to the U -enriched regions of plant introns. The protein is Splicing factor U2af large subunit A (U2AF65A) of Nicotiana plumbaginifolia (Leadwort-leaved tobacco).